Reading from the N-terminus, the 454-residue chain is Adenosylmethionine-8-amino-7-oxononanoate aminotransferase (454 aa).

Position 119–120 (119–120) interacts with pyridoxal 5'-phosphate; sequence GA. Tyrosine 152 provides a ligand contact to substrate. Residue aspartate 257 coordinates pyridoxal 5'-phosphate. The substrate site is built by lysine 286, glycine 321, and arginine 416. N6-(pyridoxal phosphate)lysine is present on lysine 286.

Belongs to the class-III pyridoxal-phosphate-dependent aminotransferase family. BioA subfamily. Homodimer. Pyridoxal 5'-phosphate is required as a cofactor.

Its subcellular location is the cytoplasm. The catalysed reaction is (8S)-8-amino-7-oxononanoate + S-adenosyl-L-methionine = S-adenosyl-4-methylsulfanyl-2-oxobutanoate + (7R,8S)-7,8-diammoniononanoate. The protein operates within cofactor biosynthesis; biotin biosynthesis; 7,8-diaminononanoate from 8-amino-7-oxononanoate (SAM route): step 1/1. Catalyzes the transfer of the alpha-amino group from S-adenosyl-L-methionine (SAM) to 7-keto-8-aminopelargonic acid (KAPA) to form 7,8-diaminopelargonic acid (DAPA). It is the only aminotransferase known to utilize SAM as an amino donor. This chain is Adenosylmethionine-8-amino-7-oxononanoate aminotransferase, found in Anoxybacillus flavithermus (strain DSM 21510 / WK1).